The primary structure comprises 768 residues: DNA replication licensing factor MCM3 homolog 1 (768 aa).

In terms of domain architecture, MCM spans 290–497 (TFDLLGNSLA…IDRQISEHVA (208 aa)). ATP is bound at residue 340-347 (GDPSVAKS). An Arginine finger motif is present at residues 472–475 (SRFD). The segment at 662 to 687 (MKQQAEHDAGATGGTVDGHGSSGNDP) is disordered. The segment covering 672 to 682 (ATGGTVDGHGS) has biased composition (gly residues).

The protein belongs to the MCM family.

It localises to the nucleus. The enzyme catalyses ATP + H2O = ADP + phosphate + H(+). Its function is as follows. Acts as a factor that allows the DNA to undergo a single round of replication per cell cycle. Required for DNA replication and cell proliferation. May act as a component of the MCM complex which is the putative replicative helicase of the replication licensing system in eukaryotic cells. The sequence is that of DNA replication licensing factor MCM3 homolog 1 (ROA1) from Zea mays (Maize).